Reading from the N-terminus, the 1258-residue chain is Ice nucleation protein (1258 aa).

An octapeptide periodicity region spans residues 162–1217; it reads ATYGSTLSGT…LTAGENSVLI (1056 aa). Disordered stretches follow at residues 260–287, 311–342, 356–383, 407–438, and 452–480; these read YGST…KGSD, TQTA…GYGS, and YGST…GSDL. Composition is skewed to polar residues over residues 261 to 286, 311 to 334, 357 to 382, 407 to 430, and 453 to 480; these read GSTQ…QKGS, TQTA…QKGS, and GSTQ…GSDL.

The protein belongs to the bacterial ice nucleation protein family.

It is found in the cell outer membrane. Ice nucleation proteins enable bacteria to nucleate crystallization in supercooled water. The sequence is that of Ice nucleation protein (iceE) from Enterobacter agglomerans (Erwinia herbicola).